Reading from the N-terminus, the 301-residue chain is MENQNYSVAVIGLGSMGMGAAVSCINAGLTTYGIDLNPVALEKLKAAGAKAVAANGYDFAHELDAVVILVVNAAQANAVLFGENGIAKKLKAGTAVMVSSTMAAQDAQIISQKLTELGLIMLDAPVSGGAAKALKGEMTVMASGSKQAFELLQPVLDATAAKVYNIGEEIGLGATVKIVHQLLAGVHIAAGAEAMALASKAGIPLDVMYDVVTNAAGNSWMFENRMKHVVEGDYTPLSMVDIFVKDLGLVNDTAKSLHFPLHLASTAYSMFTEASNAGYGKEDDSAVIKIFSGVSLPKKGA.

Residues 6 to 34 (YSVAVIGLGSMGMGAAVSCINAGLTTYGI) and threonine 101 contribute to the NAD(+) site. The active site involves lysine 177. Residue lysine 245 coordinates NAD(+).

Belongs to the HIBADH-related family. L-threonate dehydrogenase subfamily.

The enzyme catalyses L-threonate + NAD(+) = 2-dehydro-L-erythronate + NADH + H(+). Functionally, catalyzes oxidation of L-threonate to 2-oxo-tetronate. Can use either NAD(+) or NADP(+) as cosubstrate, with a preference for NAD(+). The chain is L-threonate dehydrogenase from Haemophilus influenzae (strain ATCC 51907 / DSM 11121 / KW20 / Rd).